A 105-amino-acid chain; its full sequence is Small ribosomal subunit protein uS10 (105 aa).

Belongs to the universal ribosomal protein uS10 family. As to quaternary structure, part of the 30S ribosomal subunit.

Functionally, involved in the binding of tRNA to the ribosomes. The polypeptide is Small ribosomal subunit protein uS10 (Rickettsia bellii (strain OSU 85-389)).